The chain runs to 204 residues: MGHERALARAGLGPVAGCDEAGRGACAGPLVAAAVILDDRRSGRIAGLADSKTLSAAKREALFNVIMDKALAVSWVRVEADECDRLGMQEADISGLRRAVVRLGVEPGYVLSDGFPVDGLTVPDLGMWKGDSVCACVAAASIVAKVARDRIMIAMDAEIPGYDFAVHKGYATALHQRRLKELGPSRQHRMSYANVRRAARLHSS.

The 192-residue stretch at 13–204 folds into the RNase H type-2 domain; sequence GPVAGCDEAG…VRRAARLHSS (192 aa). D19, E20, and D113 together coordinate a divalent metal cation.

It belongs to the RNase HII family. The cofactor is Mn(2+). Mg(2+) serves as cofactor.

The protein localises to the cytoplasm. The catalysed reaction is Endonucleolytic cleavage to 5'-phosphomonoester.. Functionally, endonuclease that specifically degrades the RNA of RNA-DNA hybrids. This is Ribonuclease HII from Cutibacterium acnes (strain DSM 16379 / KPA171202) (Propionibacterium acnes).